The chain runs to 183 residues: Large ribosomal subunit protein uL13m (183 aa).

It belongs to the universal ribosomal protein uL13 family. In terms of assembly, component of the mitochondrial large ribosomal subunit (mt-LSU). Mature N.crassa 74S mitochondrial ribosomes consist of a small (37S) and a large (54S) subunit. The 37S small subunit contains a 16S ribosomal RNA (16S mt-rRNA) and 32 different proteins. The 54S large subunit contains a 23S rRNA (23S mt-rRNA) and 42 different proteins.

It localises to the mitochondrion. In terms of biological role, component of the mitochondrial ribosome (mitoribosome), a dedicated translation machinery responsible for the synthesis of mitochondrial genome-encoded proteins, including at least some of the essential transmembrane subunits of the mitochondrial respiratory chain. The mitoribosomes are attached to the mitochondrial inner membrane and translation products are cotranslationally integrated into the membrane. The sequence is that of Large ribosomal subunit protein uL13m (mrpl23) from Neurospora crassa (strain ATCC 24698 / 74-OR23-1A / CBS 708.71 / DSM 1257 / FGSC 987).